A 126-amino-acid polypeptide reads, in one-letter code: S-adenosylmethionine decarboxylase proenzyme (126 aa).

Ser-63 functions as the Schiff-base intermediate with substrate; via pyruvic acid in the catalytic mechanism. Position 63 is a pyruvic acid (Ser); by autocatalysis (Ser-63). The active-site Proton acceptor; for processing activity is the His-68. Cys-83 functions as the Proton donor; for catalytic activity in the catalytic mechanism.

The protein belongs to the prokaryotic AdoMetDC family. Type 1 subfamily. As to quaternary structure, heterotetramer of two alpha and two beta chains arranged as a dimer of alpha/beta heterodimers. Pyruvate serves as cofactor. Post-translationally, is synthesized initially as an inactive proenzyme. Formation of the active enzyme involves a self-maturation process in which the active site pyruvoyl group is generated from an internal serine residue via an autocatalytic post-translational modification. Two non-identical subunits are generated from the proenzyme in this reaction, and the pyruvate is formed at the N-terminus of the alpha chain, which is derived from the carboxyl end of the proenzyme. The post-translation cleavage follows an unusual pathway, termed non-hydrolytic serinolysis, in which the side chain hydroxyl group of the serine supplies its oxygen atom to form the C-terminus of the beta chain, while the remainder of the serine residue undergoes an oxidative deamination to produce ammonia and the pyruvoyl group blocking the N-terminus of the alpha chain.

It catalyses the reaction S-adenosyl-L-methionine + H(+) = S-adenosyl 3-(methylsulfanyl)propylamine + CO2. It functions in the pathway amine and polyamine biosynthesis; S-adenosylmethioninamine biosynthesis; S-adenosylmethioninamine from S-adenosyl-L-methionine: step 1/1. Functionally, catalyzes the decarboxylation of S-adenosylmethionine to S-adenosylmethioninamine (dcAdoMet), the propylamine donor required for the synthesis of the polyamines spermine and spermidine from the diamine putrescine. The polypeptide is S-adenosylmethionine decarboxylase proenzyme (Clostridium kluyveri (strain NBRC 12016)).